We begin with the raw amino-acid sequence, 135 residues long: MSWTQPALLTCLLVLSAITLFDGADSAVSDKRDAVNPQGALRKIFMPEADAASFFKRRSRRAVKTQDEINAEQRQRLAADERRREYHEEQRNKYENYAEEENDEQDERTREKTEQWREFHYDGLDPSYEYNRHTI.

A signal peptide spans 1–26 (MSWTQPALLTCLLVLSAITLFDGADS). Positions 28–61 (VSDKRDAVNPQGALRKIFMPEADAASFFKRRSRR) are cleaved as a propeptide — ucma-N. Residues 64–114 (KTQDEINAEQRQRLAADERRREYHEEQRNKYENYAEEENDEQDERTREKTE) adopt a coiled-coil conformation. Residues 65–96 (TQDEINAEQRQRLAADERRREYHEEQRNKYEN) show a composition bias toward basic and acidic residues. The tract at residues 65 to 135 (TQDEINAEQR…PSYEYNRHTI (71 aa)) is disordered. A 4-carboxyglutamate mark is found at E68, E72, E81, E85, E88, E89, E95, E99, E100, E104, E107, E111, and E114. Residues 97–106 (YAEEENDEQD) are compositionally biased toward acidic residues. Over residues 107–123 (ERTREKTEQWREFHYDG) the composition is skewed to basic and acidic residues.

Belongs to the UCMA family. In terms of processing, proteolytically cleaved by a furin-like convertase to generate a persistent C-terminal fragment found in almost the entire cartilage matrix, and affecting osteoblast differentiation. Sulfated on tyrosine residues.

It is found in the secreted. The protein resides in the extracellular space. It localises to the extracellular matrix. Its function is as follows. May be involved in the negative control of osteogenic differentiation of osteochondrogenic precursor cells in peripheral zones of fetal cartilage and at the cartilage-bone interface. This is Unique cartilage matrix-associated protein (ucma) from Danio rerio (Zebrafish).